A 116-amino-acid polypeptide reads, in one-letter code: Regulator of ribonuclease activity B (116 aa).

The protein belongs to the RraB family. Interacts with the C-terminal region of Rne.

The protein localises to the cytoplasm. In terms of biological role, globally modulates RNA abundance by binding to RNase E (Rne) and regulating its endonucleolytic activity. Can modulate Rne action in a substrate-dependent manner by altering the composition of the degradosome. This Colwellia psychrerythraea (strain 34H / ATCC BAA-681) (Vibrio psychroerythus) protein is Regulator of ribonuclease activity B.